The sequence spans 992 residues: Meckelin (992 aa).

The N-terminal stretch at 1–36 (MVTRTRPVAAMAVRSRSSSRTGTAYLLLVLCEVSWA) is a signal peptide. The interval 37-280 (QIFSFPFRRP…FHYIFESTAG (244 aa)) is cysteine-rich. Over 37–516 (QIFSFPFRRP…SVKYEMNQGD (480 aa)) the chain is Extracellular. Cystine bridges form between Cys-49–Cys-62, Cys-65–Cys-78, Cys-80–Cys-97, Cys-100–Cys-114, Cys-117–Cys-127, Cys-129–Cys-150, Cys-153–Cys-170, Cys-173–Cys-184, Cys-186–Cys-197, Cys-237–Cys-246, Cys-253–Cys-268, and Cys-354–Cys-375. Residue Asn-242 is glycosylated (N-linked (GlcNAc...) asparagine). A helical membrane pass occupies residues 517–545 (ASVHTDIALGVLGGLAVLSSLLKTAGWKR). Topologically, residues 546–555 (RVGSPMIDLQ) are cytoplasmic. A helical transmembrane segment spans residues 556 to 587 (TVMKFLLYYAGDLANVFFIITVGTGLYWLIFF). Residues 588–600 (KAQKSVSVLLPMP) are Extracellular-facing. Residues 601–628 (VQEERFVTYVGCAFAMKALQFLHKFISQ) form a helical membrane-spanning segment. Residues 629-667 (ISIDIFFIDWERPKGKVLKAVEGEGGVRSATVPVSIWRT) are Cytoplasmic-facing. An intramembrane region (helical) is located at residues 668–676 (YFVANEWNE). The discontinuously helical transmembrane segment at 668–698 (YFVANEWNEIQTVRKINPLFQVLTTLFFLEV) threads the bilayer. An intramembrane segment occupies 677–685 (IQTVRKINP). Residues 686–698 (LFQVLTTLFFLEV) constitute an intramembrane region (helical). Topologically, residues 699-728 (VGFKNLALMDSSSSLSRNPSDYTAPYSRIL) are extracellular. The helical intramembrane region spans 729-754 (RYAVATAIWLVIGIIQVVFFAAFYER). Residues 729-768 (RYAVATAIWLVIGIIQVVFFAAFYERFIEDKIRQFVDLCS) traverse the membrane as a discontinuously helical segment. An intramembrane segment occupies 755-759 (FIEDK). Positions 760 to 768 (IRQFVDLCS) form an intramembrane region, helical. At 769 to 923 (MSNVSVFLLS…SIFYNDEGHS (155 aa)) the chain is on the cytoplasmic side. The segment at residues 924–926 (FSS) is an intramembrane region (helical). Residues 924–949 (FSSVLYYGNEATLLIFDLLFFCVVDL) form a discontinuously helical membrane-spanning segment. Residues 927–933 (VLYYGNE) lie within the membrane without spanning it. Positions 934–949 (ATLLIFDLLFFCVVDL) form an intramembrane region, helical. Topologically, residues 950–954 (ACQDF) are extracellular. Residues 955-982 (VLASFLTYLQQEIFRFIRNTVGQKNLAT) traverse the membrane as a helical segment. Residues 983–992 (KTLVDERFLI) lie on the Cytoplasmic side of the membrane.

As to quaternary structure, homodimer. Part of the tectonic-like complex (also named B9 complex). Interacts with DNAJB9, DNAJC10 and mutated SFTPC. Interacts with SYNE2 during the early establishment of cell polarity. Interacts (via C-terminus) with FLNA. Interacts with TMEM218. Interacts with WNT5A. Interacts with ROR2.

It is found in the cell membrane. The protein resides in the endoplasmic reticulum membrane. The protein localises to the cytoplasm. It localises to the cytoskeleton. Its subcellular location is the cilium basal body. Functionally, part of the tectonic-like complex which is required for tissue-specific ciliogenesis and may regulate ciliary membrane composition. Involved in centrosome migration to the apical cell surface during early ciliogenesis. Required for ciliary structure and function, including a role in regulating length and appropriate number through modulating centrosome duplication. Is a key regulator of stereociliary bundle orientation. Required for epithelial cell branching morphology. Essential for endoplasmic reticulum-associated degradation (ERAD) of surfactant protein C (sftpc). Involved in the negative regulation of canonical Wnt signaling, and activation of the non-canonical cascade stimulated by WNT5A. In non-canonical Wnt signaling, it may act as ROR2 coreceptor. In Mus musculus (Mouse), this protein is Meckelin (Tmem67).